A 75-amino-acid polypeptide reads, in one-letter code: U6-lycotoxin-Ls1g (75 aa).

The first 21 residues, 1 to 21, serve as a signal peptide directing secretion; it reads MKLLLFTALVLVVISLIEVEA. Positions 22 to 25 are excised as a propeptide; that stretch reads ENER.

Belongs to the neurotoxin 19 (CSTX) family. 06 (U6-Lctx) subfamily. Post-translationally, contains 4 disulfide bonds. As to expression, expressed by the venom gland.

The protein resides in the secreted. The protein is U6-lycotoxin-Ls1g of Lycosa singoriensis (Wolf spider).